Here is a 352-residue protein sequence, read N- to C-terminus: Protein RecA (352 aa).

Residue 65–72 participates in ATP binding; the sequence is GPESSGKT.

It belongs to the RecA family.

It is found in the cytoplasm. In terms of biological role, can catalyze the hydrolysis of ATP in the presence of single-stranded DNA, the ATP-dependent uptake of single-stranded DNA by duplex DNA, and the ATP-dependent hybridization of homologous single-stranded DNAs. It interacts with LexA causing its activation and leading to its autocatalytic cleavage. Plays a functional role in the DNA rearrangement associated with the phenotypic switching from a pathogenic smooth to a nonpathogenic rough form in this bacterium. In Pseudomonas tolaasii, this protein is Protein RecA.